Reading from the N-terminus, the 659-residue chain is Mannosyl-oligosaccharide 1,2-alpha-mannosidase IA (659 aa).

The Cytoplasmic portion of the chain corresponds to 1–48; that stretch reads MPVGGLLPLFSSPAGGGLGGGLGGGLGGGGGGGGRKGSGPSAFRLTEK. A helical; Signal-anchor for type II membrane protein membrane pass occupies residues 49–69; it reads FVLLLVFSAFITLCFGAIFFL. Residues 70–659 lie on the Lumenal side of the membrane; the sequence is PDSSKLLSGV…NIKKVEDNEK (590 aa). The disordered stretch occupies residues 88 to 121; that stretch reads QPAADHKPGPGARAEDAADGRARPGEEGAPGDPA. A compositionally biased stretch (basic and acidic residues) spans 91 to 113; it reads ADHKPGPGARAEDAADGRARPGE. The cysteines at positions 482 and 514 are disulfide-linked. Catalysis depends on Glu-528, which acts as the Proton donor. Ca(2+) is bound at residue Thr-639.

Belongs to the glycosyl hydrolase 47 family. Ca(2+) is required as a cofactor.

The protein resides in the endoplasmic reticulum membrane. It carries out the reaction N(4)-(alpha-D-Man-(1-&gt;2)-alpha-D-Man-(1-&gt;2)-alpha-D-Man-(1-&gt;3)-[alpha-D-Man-(1-&gt;2)-alpha-D-Man-(1-&gt;3)-[alpha-D-Man-(1-&gt;2)-alpha-D-Man-(1-&gt;6)]-alpha-D-Man-(1-&gt;6)]-beta-D-Man-(1-&gt;4)-beta-D-GlcNAc-(1-&gt;4)-beta-D-GlcNAc)-L-asparaginyl-[protein] (N-glucan mannose isomer 9A1,2,3B1,2,3) + 4 H2O = N(4)-(alpha-D-Man-(1-&gt;3)-[alpha-D-Man-(1-&gt;3)-[alpha-D-Man-(1-&gt;6)]-alpha-D-Man-(1-&gt;6)]-beta-D-Man-(1-&gt;4)-beta-D-GlcNAc-(1-&gt;4)-beta-D-GlcNAc)-L-asparaginyl-[protein] (N-glucan mannose isomer 5A1,2) + 4 beta-D-mannose. The catalysed reaction is N(4)-(alpha-D-Man-(1-&gt;2)-alpha-D-Man-(1-&gt;2)-alpha-D-Man-(1-&gt;3)-[alpha-D-Man-(1-&gt;3)-[alpha-D-Man-(1-&gt;2)-alpha-D-Man-(1-&gt;6)]-alpha-D-Man-(1-&gt;6)]-beta-D-Man-(1-&gt;4)-beta-D-GlcNAc-(1-&gt;4)-beta-D-GlcNAc)-L-asparaginyl-[protein] (N-glucan mannose isomer 8A1,2,3B1,3) + 3 H2O = N(4)-(alpha-D-Man-(1-&gt;3)-[alpha-D-Man-(1-&gt;3)-[alpha-D-Man-(1-&gt;6)]-alpha-D-Man-(1-&gt;6)]-beta-D-Man-(1-&gt;4)-beta-D-GlcNAc-(1-&gt;4)-beta-D-GlcNAc)-L-asparaginyl-[protein] (N-glucan mannose isomer 5A1,2) + 3 beta-D-mannose. The protein operates within protein modification; protein glycosylation. Its activity is regulated as follows. Inhibited by both 1-deoxymannojirimycin and kifunensine. In terms of biological role, involved in the maturation of Asn-linked oligosaccharides. Progressively trim alpha-1,2-linked mannose residues from Man(9)GlcNAc(2) to produce Man(5)GlcNAc(2). The chain is Mannosyl-oligosaccharide 1,2-alpha-mannosidase IA (MAN1A1) from Sus scrofa (Pig).